A 698-amino-acid chain; its full sequence is Long-chain-fatty-acid--CoA ligase 1 (698 aa).

M1 is subject to N-acetylmethionine. At Y9 the chain carries 3'-nitrotyrosine. Residues 25–45 (LPTNTLMGFGAFAALTTFWYA) traverse the membrane as a helical; Signal-anchor for type III membrane protein segment. Residues 46–698 (TRPKPLKPPC…IDDLYSTIKV (653 aa)) lie on the Cytoplasmic side of the membrane. Residue Y84 is modified to Phosphotyrosine. S135 carries an O-linked (GlcNAc) serine glycan. Residues K207, K356, and K386 each carry the N6-acetyllysine modification. Phosphoserine is present on S620. At K632 the chain carries N6-acetyllysine.

It belongs to the ATP-dependent AMP-binding enzyme family. It depends on Mg(2+) as a cofactor. In terms of tissue distribution, highly expressed in liver, heart, skeletal muscle, kidney and erythroid cells, and to a lesser extent in brain, lung, placenta and pancreas.

The protein localises to the mitochondrion outer membrane. It localises to the peroxisome membrane. Its subcellular location is the microsome membrane. It is found in the endoplasmic reticulum membrane. The enzyme catalyses a long-chain fatty acid + ATP + CoA = a long-chain fatty acyl-CoA + AMP + diphosphate. It carries out the reaction (5Z,8Z,11Z,14Z)-eicosatetraenoate + ATP + CoA = (5Z,8Z,11Z,14Z)-eicosatetraenoyl-CoA + AMP + diphosphate. It catalyses the reaction 3,7,11,15-tetramethylhexadecanoate + ATP + CoA = phytanoyl-CoA + AMP + diphosphate. The catalysed reaction is hexadecanoate + ATP + CoA = hexadecanoyl-CoA + AMP + diphosphate. The enzyme catalyses (E)-hexadec-2-enoate + ATP + CoA = (2E)-hexadecenoyl-CoA + AMP + diphosphate. It carries out the reaction 2,6,10,14-tetramethylpentadecanoate + ATP + CoA = pristanoyl-CoA + AMP + diphosphate. It catalyses the reaction 14,15-epoxy-(5Z,8Z,11Z)-eicosatrienoate + ATP + CoA = 14,15-epoxy-(5Z,8Z,11Z)-eicosatrienoyl-CoA + AMP + diphosphate. The catalysed reaction is 5-hydroxy-(6E,8Z,11Z,14Z)-eicosatetraenoate + ATP + CoA = 5-hydroxy-(6E,8Z,11Z,14Z)-eicosatetraenoyl-CoA + AMP + diphosphate. The enzyme catalyses 12-hydroxy-(5Z,8Z,10E,14Z)-eicosatetraenoate + ATP + CoA = 12-hydroxy-(5Z,8Z,10E,14Z)-eicosatetraenoyl-CoA + AMP + diphosphate. It carries out the reaction 15-hydroxy-(5Z,8Z,11Z,13E)-eicosatetraenoate + ATP + CoA = 15-hydroxy-(5Z,8Z,11Z,13E)-eicosatetraenoyl-CoA + AMP + diphosphate. It catalyses the reaction (9Z)-octadecenoate + ATP + CoA = (9Z)-octadecenoyl-CoA + AMP + diphosphate. Its activity is regulated as follows. Inhibited at high temperature and by arachidonate. Catalyzes the conversion of long-chain fatty acids to their active form acyl-CoAs for both synthesis of cellular lipids, and degradation via beta-oxidation. Preferentially uses palmitoleate, oleate and linoleate. Preferentially activates arachidonate than epoxyeicosatrienoic acids (EETs) or hydroxyeicosatrienoic acids (HETEs). In Homo sapiens (Human), this protein is Long-chain-fatty-acid--CoA ligase 1.